Consider the following 267-residue polypeptide: MAASTMALSSSTFAGKTVKLAPSSSEITGNGRITMRKTAAKPKPASSGSPWXXXXXXXXXXXXXXXXXXXXXXXXXXXXXXXXXXXXXXXXXXXXXXXXXXXXXXXXXXXXXXXXXXXXXXXXXXXXXXXXXXXXXXXXXXXXXXXXXXXXSLVHAQSILAIWACQVVLMGAVEGYRIAGGPLGEVVDPLYPGGSFDPLGLAEDPEAFAELKVKEIKNGRLAMFSMFGFFVQAIVTGKGPLENLADHIADPVNNNAWAFATNFVPGK.

Residues 1–34 (MAASTMALSSSTFAGKTVKLAPSSSEITGNGRIT) constitute a chloroplast transit peptide. A helical membrane pass occupies residues 153 to 173 (LVHAQSILAIWACQVVLMGAV). Chlorophyll b is bound by residues V154, S158, Q166, E174, R177, and L183. Chlorophyll a-binding residues include K214, E215, N218, R220, Q232, H247, and A256. A helical membrane pass occupies residues 221–241 (LAMFSMFGFFVQAIVTGKGPL). A chlorophyll b-binding site is contributed by F263.

It belongs to the light-harvesting chlorophyll a/b-binding (LHC) protein family. As to quaternary structure, the LHC complex consists of chlorophyll a-b binding proteins. Binds at least 14 chlorophylls (8 Chl-a and 6 Chl-b) and carotenoids such as lutein and neoxanthin. serves as cofactor. Photoregulated by reversible phosphorylation of its threonine residues.

It is found in the plastid. It localises to the chloroplast thylakoid membrane. Its function is as follows. The light-harvesting complex (LHC) functions as a light receptor, it captures and delivers excitation energy to photosystems with which it is closely associated. This chain is Chlorophyll a-b binding protein 3A, chloroplastic (CAB3A), found in Solanum lycopersicum (Tomato).